A 251-amino-acid chain; its full sequence is Phosphate import ATP-binding protein PstB (251 aa).

In terms of domain architecture, ABC transporter spans 5 to 246 (IEIENFSAYY…PKNRLTEEYL (242 aa)). Residue 37 to 44 (GPSGCGKT) coordinates ATP.

It belongs to the ABC transporter superfamily. Phosphate importer (TC 3.A.1.7) family. In terms of assembly, the complex is composed of two ATP-binding proteins (PstB), two transmembrane proteins (PstC and PstA) and a solute-binding protein (PstS).

The protein resides in the cell inner membrane. It catalyses the reaction phosphate(out) + ATP + H2O = ADP + 2 phosphate(in) + H(+). Its function is as follows. Part of the ABC transporter complex PstSACB involved in phosphate import. Responsible for energy coupling to the transport system. The protein is Phosphate import ATP-binding protein PstB of Thermotoga maritima (strain ATCC 43589 / DSM 3109 / JCM 10099 / NBRC 100826 / MSB8).